Reading from the N-terminus, the 215-residue chain is Proteasome subunit beta type-1 (215 aa).

At methionine 1 the chain carries N-acetylmethionine. Positions 1-19 are cleaved as a propeptide — removed in mature form; that stretch reads MNGIQVDINRLKKGEVSLG. The active-site Nucleophile is the threonine 20.

It belongs to the peptidase T1B family. As to quaternary structure, the 26S proteasome consists of a 20S proteasome core and two 19S regulatory subunits. The 20S proteasome core is composed of 28 subunits that are arranged in four stacked rings, resulting in a barrel-shaped structure. The two end rings are each formed by seven alpha subunits, and the two central rings are each formed by seven beta subunits. The catalytic chamber with the active sites is on the inside of the barrel.

It is found in the cytoplasm. The protein resides in the nucleus. The enzyme catalyses Cleavage of peptide bonds with very broad specificity.. The proteasome degrades poly-ubiquitinated proteins in the cytoplasm and in the nucleus. It is essential for the regulated turnover of proteins and for the removal of misfolded proteins. The proteasome is a multicatalytic proteinase complex that is characterized by its ability to cleave peptides with Arg, Phe, Tyr, Leu, and Glu adjacent to the leaving group at neutral or slightly basic pH. It has an ATP-dependent proteolytic activity. PRE3 and PRE4 are necessary for the peptidyl-glutamyl-peptide-hydrolyzing activity. In terms of biological role, this subunit is necessary for the peptidylglutamyl-peptide hydrolyzing activity. The chain is Proteasome subunit beta type-1 (PRE3) from Saccharomyces cerevisiae (strain ATCC 204508 / S288c) (Baker's yeast).